We begin with the raw amino-acid sequence, 332 residues long: Ferredoxin--NADP reductase 1 (332 aa).

7 residues coordinate FAD: aspartate 35, lysine 43, phenylalanine 48, valine 88, phenylalanine 123, aspartate 284, and threonine 325.

It belongs to the ferredoxin--NADP reductase type 2 family. In terms of assembly, homodimer. It depends on FAD as a cofactor.

The catalysed reaction is 2 reduced [2Fe-2S]-[ferredoxin] + NADP(+) + H(+) = 2 oxidized [2Fe-2S]-[ferredoxin] + NADPH. The sequence is that of Ferredoxin--NADP reductase 1 from Listeria innocua serovar 6a (strain ATCC BAA-680 / CLIP 11262).